Consider the following 851-residue polypeptide: Probable alpha,alpha-trehalose-phosphate synthase [UDP-forming] 7 (851 aa).

Serine 5 carries the post-translational modification Phosphoserine. Threonine 32 is subject to Phosphothreonine. The tract at residues 59–540 (DRMIIVANRL…SRSFLQDLER (482 aa)) is glycosyltransferase.

In the N-terminal section; belongs to the glycosyltransferase 20 family. It in the C-terminal section; belongs to the trehalose phosphatase family. Binds to the phosphopeptide-binding site of GRF/14-3-3. In terms of processing, phosphorylated. Expressed in seedlings, leaves, roots, stems, flowers and siliques.

It carries out the reaction D-glucose 6-phosphate + UDP-alpha-D-glucose = alpha,alpha-trehalose 6-phosphate + UDP + H(+). This is Probable alpha,alpha-trehalose-phosphate synthase [UDP-forming] 7 (TPS7) from Arabidopsis thaliana (Mouse-ear cress).